The following is a 490-amino-acid chain: MDPVLVLVLTLSCLLLFSVWRQSSGRGRLPPGPTPLPLIGNILQIDIKDISKSLANFSKVYGPVFTLYFGTKPTVVVHGYEAVKEALEDLGEEFSGRGNFPIVERMNSGLGIIFSNGTKWKELRRFSLMTLRNFGMGKRSIEDCIQEEARCLVEELRKTNGSPCDPTFFLSCAPSNVICSVVFHNRFDYNDKNFLNLMEKLNENFEILNSPWLQVCNVIPAFLDYLPGSHNKALKNFAEIKSYILKRVKEHQETLDMNNPRDFIDCFLIKMEKEKDNPHSEFTTESLMATVADVFVAGSETTSTTLRYGLLLLLKHKEVTAKVQKEIDHVIGRDRSPCMQDRTRMPYTDAMVHEVQRYVNLIPNNVPHAATCNVKFRNYVIPKGTDLITSLTSVLHDDKEFPNPKIFDPAHFLDENGNFKKSDYFMPFSIGKRMCMGEALARMELFLLLTTILQNFDLKSLADTKDIDTTPVASTFGCVPPSYQLYFIPR.

Residue Ser127 is modified to Phosphoserine. An N6-acetyllysine mark is found at Lys249 and Lys375. Cys435 lines the heme pocket.

This sequence belongs to the cytochrome P450 family. It depends on heme as a cofactor. Liver.

Its subcellular location is the endoplasmic reticulum membrane. It localises to the microsome membrane. The catalysed reaction is an organic molecule + reduced [NADPH--hemoprotein reductase] + O2 = an alcohol + oxidized [NADPH--hemoprotein reductase] + H2O + H(+). Functionally, catalyzes the N-demethylation of aminopyrine and benzphetamine, but does not catalyze the hydroxylation of tolbutamide, testosterone, and progesterone. The chain is Cytochrome P450 2C28 (CYP2C28) from Mesocricetus auratus (Golden hamster).